A 108-amino-acid chain; its full sequence is Large ribosomal subunit protein bL21c (108 aa).

The protein belongs to the bacterial ribosomal protein bL21 family. As to quaternary structure, part of the 50S ribosomal subunit.

It is found in the plastid. It localises to the chloroplast. Functionally, this protein binds to 23S rRNA. In Cyanidium caldarium (Red alga), this protein is Large ribosomal subunit protein bL21c.